Here is a 247-residue protein sequence, read N- to C-terminus: MRYPMSKLAYHRVLLKLSGEALMGSADYGIDPKVINRLAGEVIEAQNAGAELALVIGGGNIFRGAGLAAKGMDRVTGDQMGMLATIINALAMQDALEKLGTKVRVMSAIKINNVCEDFIRRRAIRHLEKSRITIFAAGTGNPFFTTDSGAALRAIEIGADLLLKATKVDGIYNKDPQKHCDAVKYSTLSYDEVISQNLEVMDTAAFALARDSNLPLRIFDIEQPGVLLRILHGEEIGTLVKERNSKS.

ATP is bound at residue 16–19; that stretch reads KLSG. Gly-58 lines the UMP pocket. Residues Gly-59 and Arg-63 each coordinate ATP. UMP is bound by residues Asp-78 and 139–146; that span reads TGNPFFTT. Thr-166, Tyr-172, and Asp-175 together coordinate ATP.

Belongs to the UMP kinase family. As to quaternary structure, homohexamer.

The protein resides in the cytoplasm. The enzyme catalyses UMP + ATP = UDP + ADP. The protein operates within pyrimidine metabolism; CTP biosynthesis via de novo pathway; UDP from UMP (UMPK route): step 1/1. With respect to regulation, inhibited by UTP. Catalyzes the reversible phosphorylation of UMP to UDP. The chain is Uridylate kinase from Xylella fastidiosa (strain Temecula1 / ATCC 700964).